A 191-amino-acid polypeptide reads, in one-letter code: dTTP/UTP pyrophosphatase (191 aa).

Asp65 acts as the Proton acceptor in catalysis.

It belongs to the Maf family. YhdE subfamily. The cofactor is a divalent metal cation.

The protein resides in the cytoplasm. The catalysed reaction is dTTP + H2O = dTMP + diphosphate + H(+). It carries out the reaction UTP + H2O = UMP + diphosphate + H(+). Its function is as follows. Nucleoside triphosphate pyrophosphatase that hydrolyzes dTTP and UTP. May have a dual role in cell division arrest and in preventing the incorporation of modified nucleotides into cellular nucleic acids. This is dTTP/UTP pyrophosphatase from Leptospira biflexa serovar Patoc (strain Patoc 1 / Ames).